A 62-amino-acid chain; its full sequence is Small ribosomal subunit protein bS21 (62 aa).

Positions 43-52 are enriched in basic and acidic residues; it reads VKKKLKSEAA. Positions 43–62 are disordered; that stretch reads VKKKLKSEAARKRKAKKKRF. Over residues 53–62 the composition is skewed to basic residues; sequence RKRKAKKKRF.

This sequence belongs to the bacterial ribosomal protein bS21 family.

The chain is Small ribosomal subunit protein bS21 from Levilactobacillus brevis (strain ATCC 367 / BCRC 12310 / CIP 105137 / JCM 1170 / LMG 11437 / NCIMB 947 / NCTC 947) (Lactobacillus brevis).